Reading from the N-terminus, the 248-residue chain is 1-(5-phosphoribosyl)-5-[(5-phosphoribosylamino)methylideneamino] imidazole-4-carboxamide isomerase (248 aa).

Residue Asp11 is the Proton acceptor of the active site. Asp132 acts as the Proton donor in catalysis.

Belongs to the HisA/HisF family.

The protein resides in the cytoplasm. It carries out the reaction 1-(5-phospho-beta-D-ribosyl)-5-[(5-phospho-beta-D-ribosylamino)methylideneamino]imidazole-4-carboxamide = 5-[(5-phospho-1-deoxy-D-ribulos-1-ylimino)methylamino]-1-(5-phospho-beta-D-ribosyl)imidazole-4-carboxamide. The protein operates within amino-acid biosynthesis; L-histidine biosynthesis; L-histidine from 5-phospho-alpha-D-ribose 1-diphosphate: step 4/9. This chain is 1-(5-phosphoribosyl)-5-[(5-phosphoribosylamino)methylideneamino] imidazole-4-carboxamide isomerase, found in Afipia carboxidovorans (strain ATCC 49405 / DSM 1227 / KCTC 32145 / OM5) (Oligotropha carboxidovorans).